We begin with the raw amino-acid sequence, 90 residues long: uncharacterized protein (90 aa).

A signal peptide spans methionine 1 to alanine 18.

This is an uncharacterized protein from Escherichia coli (strain K12).